Consider the following 251-residue polypeptide: Cell division protein ZapD (251 aa).

It belongs to the ZapD family. Interacts with FtsZ.

It is found in the cytoplasm. Functionally, cell division factor that enhances FtsZ-ring assembly. Directly interacts with FtsZ and promotes bundling of FtsZ protofilaments, with a reduction in FtsZ GTPase activity. This is Cell division protein ZapD from Burkholderia vietnamiensis (strain G4 / LMG 22486) (Burkholderia cepacia (strain R1808)).